The chain runs to 37 residues: Large ribosomal subunit protein bL36A (37 aa).

The protein belongs to the bacterial ribosomal protein bL36 family.

In Leifsonia xyli subsp. xyli (strain CTCB07), this protein is Large ribosomal subunit protein bL36A.